Here is a 124-residue protein sequence, read N- to C-terminus: Small ribosomal subunit protein bS16 (124 aa).

Positions 88–124 (VPEQTKQAQPKAKAQERLREAEEKARAAAEAAASAEG) are disordered. Positions 100 to 114 (KAQERLREAEEKARA) are enriched in basic and acidic residues. Over residues 115–124 (AAEAAASAEG) the composition is skewed to low complexity.

It belongs to the bacterial ribosomal protein bS16 family.

This is Small ribosomal subunit protein bS16 from Rhodospirillum rubrum (strain ATCC 11170 / ATH 1.1.1 / DSM 467 / LMG 4362 / NCIMB 8255 / S1).